The chain runs to 60 residues: Large ribosomal subunit protein bL32 (60 aa).

Belongs to the bacterial ribosomal protein bL32 family.

The sequence is that of Large ribosomal subunit protein bL32 (rpmF) from Thermotoga maritima (strain ATCC 43589 / DSM 3109 / JCM 10099 / NBRC 100826 / MSB8).